We begin with the raw amino-acid sequence, 69 residues long: Cold shock-like protein CspC (69 aa).

One can recognise a CSD domain in the interval Gly6–Val66.

The protein localises to the cytoplasm. This Escherichia coli O157:H7 protein is Cold shock-like protein CspC (cspC).